The following is a 494-amino-acid chain: Myocyte-specific enhancer factor 2A (494 aa).

Residues R3–Y57 enclose the MADS-box domain. The mef2-type DNA-binding region spans A58–E86. Residue S59 is modified to Phosphoserine; by CK2. Residues S98 and S108 each carry the phosphoserine modification. Residues T171–P181 show a composition bias toward low complexity. Residues T171–A218 are disordered. S233 bears the Phosphoserine mark. The interval G238 to K268 is disordered. Position 247 is an N6-acetyllysine (K247). S253 bears the Phosphoserine mark. The required for interaction with MAPKs stretch occupies residues M264 to G281. T302 and T309 each carry phosphothreonine; by MAPK7 and MAPK14. Phosphoserine; by MAPK7 is present on S345. Positions S380–I392 are enriched in polar residues. The disordered stretch occupies residues S380–T494. K393 is subject to N6-acetyllysine; alternate. A Glycyl lysine isopeptide (Lys-Gly) (interchain with G-Cter in SUMO); alternate cross-link involves residue K393. Residue S398 is modified to Phosphoserine; by CDK5. T405 is modified (phosphothreonine). Positions Q418–Q432 are enriched in pro residues. S440 carries the phosphoserine modification. Low complexity predominate over residues S440–D453. 2 stretches are compositionally biased toward basic and acidic residues: residues G454–F464 and N475–T494.

As to quaternary structure, binds DNA as a homo- or heterodimer. Dimerizes with MEF2D. Interacts with HDAC7. Interacts with PIAS1; the interaction enhances sumoylation. Interacts with HDAC4, HDAC9 and SLC2A4RG. Interacts (via the N-terminal) with MAPK7; the interaction results in the phosphorylation and transcriptional activity of MEF2A. Constitutive phosphorylation on Ser-398 promotes Lys-393 sumoylation thus preventing acetylation at this site. Dephosphorylation on Ser-398 by PPP3CA upon neuron depolarization promotes a switch from sumoylation to acetylation on residue Lys-393 leading to inhibition of dendrite claw differentiation. Phosphorylation on Thr-302 and Thr-309 are the main sites involved in p38 MAPK signaling and activate transcription. Phosphorylated on these sites by MAPK14/p38alpha and MAPK11/p38beta, but not by MAPK13/p38delta nor by MAPK12/p38gamma. Phosphorylation on Ser-398 by CDK5 induced by neurotoxicity inhibits MEF2A transcriptional activation leading to apoptosis of cortical neurons. Phosphorylation on Thr-302, Thr-309 and Ser-345 can be induced by EGF. Post-translationally, sumoylation on Lys-393 is enhanced by PIAS1 and represses transcriptional activity. Phosphorylation on Ser-398 is required for sumoylation. Has no effect on nuclear location nor on DNA binding. Sumoylated with SUMO1 and, to a lesser extent with SUMO2 and SUMO3. PIASx facilitates sumoylation in postsynaptic dendrites in the cerebellar cortex and promotes their morphogenesis. In terms of processing, acetylation on Lys-393 activates transcriptional activity. Acetylated by p300 on several sites in diffentiating myocytes. Acetylation on Lys-4 increases DNA binding and transactivation. Hyperacetylation by p300 leads to enhanced cardiac myocyte growth and heart failure. Proteolytically cleaved in cerebellar granule neurons on several sites by caspase 3 and caspase 7 following neurotoxicity. Preferentially cleaves the CDK5-mediated hyperphosphorylated form which leads to neuron apoptosis and transcriptional inactivation.

Its subcellular location is the nucleus. Its function is as follows. Transcriptional activator which binds specifically to the MEF2 element, 5'-YTA[AT](4)TAR-3', found in numerous muscle-specific genes. Also involved in the activation of numerous growth factor- and stress-induced genes. Mediates cellular functions not only in skeletal and cardiac muscle development, but also in neuronal differentiation and survival. Plays diverse roles in the control of cell growth, survival and apoptosis via p38 MAPK signaling in muscle-specific and/or growth factor-related transcription. In cerebellar granule neurons, phosphorylated and sumoylated MEF2A represses transcription of NUR77 promoting synaptic differentiation. Associates with chromatin to the ZNF16 promoter. The sequence is that of Myocyte-specific enhancer factor 2A (MEF2A) from Pongo abelii (Sumatran orangutan).